The primary structure comprises 503 residues: ATP synthase subunit beta (503 aa).

Glycine 157–threonine 164 is a binding site for ATP.

The protein belongs to the ATPase alpha/beta chains family. As to quaternary structure, F-type ATPases have 2 components, CF(1) - the catalytic core - and CF(0) - the membrane proton channel. CF(1) has five subunits: alpha(3), beta(3), gamma(1), delta(1), epsilon(1). CF(0) has three main subunits: a(1), b(2) and c(9-12). The alpha and beta chains form an alternating ring which encloses part of the gamma chain. CF(1) is attached to CF(0) by a central stalk formed by the gamma and epsilon chains, while a peripheral stalk is formed by the delta and b chains.

The protein resides in the cell membrane. The catalysed reaction is ATP + H2O + 4 H(+)(in) = ADP + phosphate + 5 H(+)(out). Produces ATP from ADP in the presence of a proton gradient across the membrane. The catalytic sites are hosted primarily by the beta subunits. The chain is ATP synthase subunit beta from Christiangramia forsetii (strain DSM 17595 / CGMCC 1.15422 / KT0803) (Gramella forsetii).